The primary structure comprises 311 residues: Tricarboxylate transport protein, mitochondrial (311 aa).

Positions 1-13 (MPAPRAPRALAAA) are cleaved as a propeptide — removed in mature form. Solcar repeat units lie at residues 23 to 111 (THPG…LSNH), 122 to 208 (TRGL…LRNW), and 218 to 303 (MNPL…VVKL). 3 consecutive transmembrane segments (helical) span residues 29–46 (ILAGGLAGGIEICITFPT), 86–105 (GLSSLLYGSIPKAAVRFGMF), and 129–143 (LGAGVAEAVVVVCPM). At Ser-156 the chain carries Phosphoserine. 3 consecutive transmembrane segments (helical) span residues 183 to 202 (GLTATVLKQGSNQAIRFFVM), 224 to 241 (GVFGAIAGAASVFGNTPL), and 278 to 297 (GTVPRLGRVCLDVAIVFVIY).

Belongs to the mitochondrial carrier (TC 2.A.29) family. In terms of processing, possesses a short cleavable presequence, which, however, is found to be dispensable both for targeting to mitochondria and insertion into the inner membrane. However, the presequence is required to keep SLC25A1 in a soluble state and thus in an import-competent state. Mature SLC25A1 lacking the presequence is prone to aggregation.

Its subcellular location is the mitochondrion inner membrane. It catalyses the reaction (S)-malate(in) + citrate(out) = (S)-malate(out) + citrate(in). The enzyme catalyses D-threo-isocitrate(in) + citrate(out) = D-threo-isocitrate(out) + citrate(in). The catalysed reaction is citrate(out) + succinate(in) = citrate(in) + succinate(out). It carries out the reaction cis-aconitate(in) + citrate(out) = cis-aconitate(out) + citrate(in). It catalyses the reaction trans-aconitate(in) + citrate(out) = trans-aconitate(out) + citrate(in). The enzyme catalyses phosphoenolpyruvate(in) + citrate(out) = phosphoenolpyruvate(out) + citrate(in). The catalysed reaction is maleate(in) + citrate(out) = maleate(out) + citrate(in). In terms of biological role, mitochondrial electroneutral antiporter that exports citrate from the mitochondria into the cytosol in exchange for malate. Also able to mediate the exchange of citrate for isocitrate, phosphoenolpyruvate, cis-aconitate and to a lesser extent trans-aconitate, maleate and succinate. In the cytoplasm, citrate plays important roles in fatty acid and sterol synthesis, regulation of glycolysis, protein acetylation, and other physiopathological processes. This is Tricarboxylate transport protein, mitochondrial (SLC25A1) from Homo sapiens (Human).